Here is a 469-residue protein sequence, read N- to C-terminus: MATCSRQFTSSSSMKGSCGIGGGSSRMSSILAGGSCRAPSTCGGMSVTSSRFSSGGVCGIGGGYGGSFSSSSFGGGLGSGFGGRFDGFGGGFGAGLGGGLGGGIGDGLLVGSEKVTMQNLNDRLATYLDKVRALEEANRDLEVKIRDWYQRQRPTEIKDYSPYFKTIEDLKSKIIIATQENAQFTLQIDNARLAADDFRTKYENELFLRQSVEGDINGLRKVLDELTLSRADLEMQIENLREELAFLKKNHEEEMLALRGQTGGDVNVEMDAAPGVDLSRILNEMRDQYEQMAEKNRRDVEAWFLRKTEELNKEVASNSDLIQSNRSEVAELRRVFQGLEIELQSQLSMKASLENSLEETKGRYCMQLSQIQGLISSVEEQLAQLRCEMEQQSQEYNILLDVKTRLEQEIATYRRLLDGENIHSSSQHSSGQSYSSREVFSSSSRQPRSILKEQGSTSFSQSQSQSSRD.

The interval 1–20 (MATCSRQFTSSSSMKGSCGI) is disordered. Residues 1–112 (MATCSRQFTS…GIGDGLLVGS (112 aa)) are head. A coil 1A region spans residues 113-148 (EKVTMQNLNDRLATYLDKVRALEEANRDLEVKIRDW). In terms of domain architecture, IF rod spans 113 to 424 (EKVTMQNLND…RLLDGENIHS (312 aa)). Residues 149-166 (YQRQRPTEIKDYSPYFKT) are linker 1. The segment at 167–258 (IEDLKSKIII…KNHEEEMLAL (92 aa)) is coil 1B. Residues 259–281 (RGQTGGDVNVEMDAAPGVDLSRI) form a linker 12 region. The tract at residues 282–420 (LNEMRDQYEQ…ATYRRLLDGE (139 aa)) is coil 2. The segment at 421 to 469 (NIHSSSQHSSGQSYSSREVFSSSSRQPRSILKEQGSTSFSQSQSQSSRD) is tail. A disordered region spans residues 422–469 (IHSSSQHSSGQSYSSREVFSSSSRQPRSILKEQGSTSFSQSQSQSSRD). Composition is skewed to low complexity over residues 423–444 (HSSS…SSSS) and 454–469 (QGST…SSRD).

It belongs to the intermediate filament family. As to quaternary structure, heterodimer of a type I and a type II keratin. KRT16 associates with KRT6 isomers (KRT6A or KRT6B). Interacts with TCHP. Interacts with TRADD. As to expression, expressed in the epithelia of the tongue, upper and lower palate, footpad, proximal nail fold and nail bed, penile spine, sweat gland ducts, and back epidermis (at protein level). Expressed in upper suprabasal layers of the corneal epithelium (at protein level). Expressed in internal stratified epithelia in the esophagus and vagina (at protein level). Expressed in transitional stratified squamous epithelia in the forestomach, anal canal, and nasal cavity (at protein level). Expressed in transitional epithelia of the ureter, bladder and urethra (at protein level). In mature hair follicles, expressed in the companion layer of the outer root sheath during anagen and in the club hair sheath during catagen and telogen (at protein level).

In terms of biological role, epidermis-specific type I keratin that plays a key role in skin. Acts as a regulator of innate immunity in response to skin barrier breach: required for some inflammatory checkpoint for the skin barrier maintenance. In Mus musculus (Mouse), this protein is Keratin, type I cytoskeletal 16 (Krt16).